The sequence spans 493 residues: Hexokinase-like 1 protein (493 aa).

Residues 38 to 488 (ASTCPILTKF…SGLGAALLAA (451 aa)) form the Hexokinase domain. Residues 93–232 (SGNEEGLFYA…GLDMRVSALV (140 aa)) are hexokinase small subdomain. Residues glycine 107, threonine 108, and asparagine 109 each coordinate ADP. The D-glucose site is built by threonine 198, lysine 199, asparagine 233, and aspartate 234. The tract at residues 233-477 (NDGVGTLAGA…SHVAIKHTKD (245 aa)) is hexokinase large subdomain. Threonine 257 is a binding site for ADP. The D-glucose site is built by asparagine 260, glutamate 287, and glutamate 317. Alanine 442 serves as a coordination point for ADP.

The protein belongs to the hexokinase family.

It carries out the reaction a D-hexose + ATP = a D-hexose 6-phosphate + ADP + H(+). It catalyses the reaction D-fructose + ATP = D-fructose 6-phosphate + ADP + H(+). The enzyme catalyses D-glucose + ATP = D-glucose 6-phosphate + ADP + H(+). It functions in the pathway carbohydrate metabolism; hexose metabolism. Its pathway is carbohydrate degradation; glycolysis; D-glyceraldehyde 3-phosphate and glycerone phosphate from D-glucose: step 1/4. Its function is as follows. Fructose and glucose phosphorylating enzyme. This is Hexokinase-like 1 protein from Arabidopsis thaliana (Mouse-ear cress).